The chain runs to 59 residues: uncharacterized protein (59 aa).

The chain crosses the membrane as a helical span at residues W6–I26.

Its subcellular location is the membrane. This is an uncharacterized protein from Escherichia coli O157:H7.